Consider the following 145-residue polypeptide: Large ribosomal subunit protein uL16 (145 aa).

Positions 76–95 (PKTKTPAETRMGKGKGEPEH) are enriched in basic and acidic residues. The tract at residues 76 to 97 (PKTKTPAETRMGKGKGEPEHFV) is disordered.

The protein belongs to the universal ribosomal protein uL16 family. Part of the 50S ribosomal subunit.

Its function is as follows. Binds 23S rRNA and is also seen to make contacts with the A and possibly P site tRNAs. This chain is Large ribosomal subunit protein uL16, found in Salinibacter ruber (strain DSM 13855 / M31).